Reading from the N-terminus, the 170-residue chain is Lipoprotein signal peptidase (170 aa).

The next 3 helical transmembrane spans lie at 9–29 (FNIF…KYLV), 72–92 (IFFL…SLKE), and 94–114 (NCIA…NVID). Catalysis depends on residues D124 and D146. A helical transmembrane segment spans residues 143–163 (NFADSYVVIGMILFLVYDFFI).

Belongs to the peptidase A8 family.

It localises to the cell inner membrane. The enzyme catalyses Release of signal peptides from bacterial membrane prolipoproteins. Hydrolyzes -Xaa-Yaa-Zaa-|-(S,diacylglyceryl)Cys-, in which Xaa is hydrophobic (preferably Leu), and Yaa (Ala or Ser) and Zaa (Gly or Ala) have small, neutral side chains.. It functions in the pathway protein modification; lipoprotein biosynthesis (signal peptide cleavage). Functionally, this protein specifically catalyzes the removal of signal peptides from prolipoproteins. In Borreliella burgdorferi (strain ATCC 35210 / DSM 4680 / CIP 102532 / B31) (Borrelia burgdorferi), this protein is Lipoprotein signal peptidase.